The sequence spans 264 residues: MTLQPTAADVGAMYDQYTSLLTDVMAGFIHVGYWEDPSSEETMEVATERMTREVGARLSSSAGQHILDVGCGTGKSAVQIANTHGVQITGITVSKSQIEEAQALYGSAVQAGQVSYQFANAMDLPFADASFDGAYAIESLVHMDDRRTALQNIARVLRPGSRLAIADLCLDAHCPNPEALARFHELFQVPPMSSGEELQELLRETGFRVLEFTDIRDNVRPVCKFLEKKALSLEGEVGEKLLEIATSMATLKELGYAFITAERI.

S-adenosyl-L-methionine contacts are provided by glutamine 97 and histidine 142.

It belongs to the methyltransferase superfamily.

The catalysed reaction is desmethylrestrictinol + S-adenosyl-L-methionine = restrictinol + S-adenosyl-L-homocysteine + H(+). The protein operates within antifungal biosynthesis. Its function is as follows. O-methyltransferase; part of the gene cluster that mediates the biosynthesis of the tetrahydropyranyl antifungal agent restricticin that acts as an inhibitor of CYP51 and blocks the ergosterol biosynthesis. Within the pathway, resE uses S-adenosylmethionine to methylate position C4 of desmethylrestrictinol to produce restrictinol. The highly reducing polyketide synthase resH, the short chain dehydrogenase resG, the cyclase resF, the FAD-dependent monooxygenase resA and the enoylreductase resD are required to generate the first stable intermediate desmethylrestrictinol. ResH with resD biosynthesize the first polyketide chain intermediate that is reduced by resG, followed by epoxidation by resA before 6-endo cyclization via epoxide opening by resF leads to desmethylrestrictinol. The methyltransferase resE then catalyzes the C4 O-methylation of desmethylrestrictinol to produce restrictinol, and the nonribosomal peptide synthetase resC catalyzes the C3 esterification of restrictinol with glycine that leads to restricticin. The protein is O-methyltransferase resE of Aspergillus sclerotiorum.